The primary structure comprises 331 residues: Aspartate carbamoyltransferase catalytic subunit (331 aa).

Residues R76 and T77 each contribute to the carbamoyl phosphate site. An L-aspartate-binding site is contributed by K104. R126, H154, and Q157 together coordinate carbamoyl phosphate. 2 residues coordinate L-aspartate: R187 and R246. 2 residues coordinate carbamoyl phosphate: G287 and P288.

Belongs to the aspartate/ornithine carbamoyltransferase superfamily. ATCase family. Heterododecamer (2C3:3R2) of six catalytic PyrB chains organized as two trimers (C3), and six regulatory PyrI chains organized as three dimers (R2).

The enzyme catalyses carbamoyl phosphate + L-aspartate = N-carbamoyl-L-aspartate + phosphate + H(+). It participates in pyrimidine metabolism; UMP biosynthesis via de novo pathway; (S)-dihydroorotate from bicarbonate: step 2/3. In terms of biological role, catalyzes the condensation of carbamoyl phosphate and aspartate to form carbamoyl aspartate and inorganic phosphate, the committed step in the de novo pyrimidine nucleotide biosynthesis pathway. In Dehalococcoides mccartyi (strain ATCC BAA-2100 / JCM 16839 / KCTC 5957 / BAV1), this protein is Aspartate carbamoyltransferase catalytic subunit.